We begin with the raw amino-acid sequence, 1216 residues long: RAB11-binding protein RELCH (1216 aa).

Disordered stretches follow at residues 1–73 (MAAM…GLPG) and 135–177 (GNFE…QLNR). Position 2 is an N-acetylalanine (alanine 2). Serine 20 and serine 22 each carry phosphoserine. Residues 21 to 31 (DSDEDDDEVAA) show a composition bias toward acidic residues. Residue threonine 32 is modified to Phosphothreonine. Phosphoserine is present on residues serine 54 and serine 56. Residues 148–163 (GAPGVPGAAGVGGAGG) show a composition bias toward gly residues. Phosphoserine is present on residues serine 180 and serine 182. A Phosphothreonine modification is found at threonine 183. Serine 186 is modified (phosphoserine). A coiled-coil region spans residues 197 to 231 (NRETDEKVAVLEFELRKAKETIQALRANLTKAAEH). One can recognise a LisH domain in the interval 255–287 (EKRALNFLVNEFLLKNNYKLTSITFSDENDDQD). A coiled-coil region spans residues 359–397 (VQKLEDKISLLNSEKWSLMEQIRRLKSEMDFLKNEHFAI). At serine 385 the chain carries Phosphoserine. The disordered stretch occupies residues 401–477 (CDSVQPPLDQ…SSLSSKKTVH (77 aa)). Over residues 411–435 (LPHKDSEDSGQHPDVNSSDKGKNTD) the composition is skewed to basic and acidic residues. Serine 453 is subject to Phosphoserine. The segment at 497-779 (CRMSADSRLG…SSKAKLHGEV (283 aa)) is interaction with RAB11A and RAB11B. HEAT repeat units lie at residues 601-639 (LLPQ…RSSL) and 640-679 (VLSM…KYHQ). At serine 792 the chain carries Phosphoserine. The HEAT 3 repeat unit spans residues 1004–1042 (VAPALVTLSSDPEFSVRIATIPAFGTIMETVIQRELLER). A Phosphoserine modification is found at serine 1149.

It is found in the recycling endosome. It localises to the golgi apparatus. The protein localises to the trans-Golgi network. In terms of biological role, regulates intracellular cholesterol distribution from recycling endosomes to the trans-Golgi network through interactions with RAB11 and OSBP. Functions in membrane tethering and promotes OSBP-mediated cholesterol transfer between RAB11-bound recycling endosomes and OSBP-bound Golgi-like membranes. The chain is RAB11-binding protein RELCH from Homo sapiens (Human).